The primary structure comprises 122 residues: MIQMQSRLDVADNTGAKSVMCIKVLGGSKRRYAGIGDVIKVSIKEAAPRGRVKKGEVYSAVVVRTAKGVRRQDGSLVKFDGNAAVLLNAKLEPIGTRIFGPVTRELRTERFMKIVSLAPEVL.

This sequence belongs to the universal ribosomal protein uL14 family. In terms of assembly, part of the 50S ribosomal subunit. Forms a cluster with proteins L3 and L19. In the 70S ribosome, L14 and L19 interact and together make contacts with the 16S rRNA in bridges B5 and B8.

Functionally, binds to 23S rRNA. Forms part of two intersubunit bridges in the 70S ribosome. The polypeptide is Large ribosomal subunit protein uL14 (Methylibium petroleiphilum (strain ATCC BAA-1232 / LMG 22953 / PM1)).